The chain runs to 92 residues: Putative septation protein SpoVG (92 aa).

Belongs to the SpoVG family.

Functionally, could be involved in septation. This Thermoanaerobacter sp. (strain X514) protein is Putative septation protein SpoVG.